Here is a 237-residue protein sequence, read N- to C-terminus: Cysteine-rich venom protein tigrin (237 aa).

An N-terminal signal peptide occupies residues 1-18 (MIVFILLSLAAVLRQSFG). An SCP domain is found at 37–165 (VNIHNSFRRS…LYNYFYVCQY (129 aa)). 8 disulfide bridges follow: Cys-74–Cys-152, Cys-91–Cys-166, Cys-147–Cys-163, Cys-185–Cys-192, Cys-188–Cys-197, Cys-201–Cys-232, Cys-210–Cys-226, and Cys-217–Cys-230. In terms of domain architecture, ShKT spans 201-232 (CTHKDDYNNCNSLVSDCQSDWDKSHCPATCFC).

The protein belongs to the CRISP family. Expressed by the venom gland.

It is found in the secreted. In terms of biological role, this protein does not inhibit smooth muscle contraction elicited by high potassium levels or caffeine. This Rhabdophis tigrinus tigrinus (Tiger keelback snake) protein is Cysteine-rich venom protein tigrin.